The following is a 191-amino-acid chain: Small ribosomal subunit protein uS7 (191 aa).

Residues 56–80 are disordered; that stretch reads NKSGEQGDGDGEGGGKAGGIKKRSL.

This sequence belongs to the universal ribosomal protein uS7 family. Part of the 30S ribosomal subunit. Contacts proteins S9 and S11.

In terms of biological role, one of the primary rRNA binding proteins, it binds directly to 16S rRNA where it nucleates assembly of the head domain of the 30S subunit. Is located at the subunit interface close to the decoding center, probably blocks exit of the E-site tRNA. The chain is Small ribosomal subunit protein uS7 from Coxiella burnetii (strain CbuG_Q212) (Coxiella burnetii (strain Q212)).